Here is a 506-residue protein sequence, read N- to C-terminus: Pyruvate kinase 2 (506 aa).

The residue at position 24 (S24) is a Phosphoserine. R51 is a binding site for substrate. 4 residues coordinate K(+): N53, S55, D86, and T87. Residue 53–56 coordinates ATP; it reads NFSH. R93 and K179 together coordinate ATP. E244 contacts Mg(2+). The substrate site is built by G267, D268, and T300. Residue D268 coordinates Mg(2+).

The protein belongs to the pyruvate kinase family. In terms of assembly, homotetramer. The cofactor is Mg(2+). It depends on K(+) as a cofactor.

It catalyses the reaction pyruvate + ATP = phosphoenolpyruvate + ADP + H(+). Its pathway is carbohydrate degradation; glycolysis; pyruvate from D-glyceraldehyde 3-phosphate: step 5/5. With respect to regulation, not activated by fructose-1,6-bisphosphate. Its function is as follows. May be used by cells under conditions in which the level of glycolytic flux is very low. The polypeptide is Pyruvate kinase 2 (PYK2) (Saccharomyces cerevisiae (strain ATCC 204508 / S288c) (Baker's yeast)).